We begin with the raw amino-acid sequence, 988 residues long: Exportin-T (988 aa).

The protein belongs to the exportin family. Expressed in young leaves, growing leaf blades, young floral organs and root tips.

It is found in the nucleus. It localises to the cytoplasm. Its function is as follows. Probable tRNA nucleus export receptor which regulates tRNA processing and facilitates tRNA translocation across the nuclear pore complex. Is required for proper activity of the shoot apical meristem (SAM) and correct leaf initiation at different developmental stages, and may play a role in floral patterning. The polypeptide is Exportin-T (PSD) (Arabidopsis thaliana (Mouse-ear cress)).